A 525-amino-acid polypeptide reads, in one-letter code: Serine/threonine-protein kinase YPK3 (525 aa).

Phosphoserine is present on residues Ser-90 and Ser-105. Thr-107 carries the post-translational modification Phosphothreonine. A Protein kinase domain is found at 128–424 (FKPVRVLGQG…KTGANNKPTK (297 aa)). ATP-binding positions include 134–142 (LGQGAYGKV) and Lys-157. The interval 170–193 (ATDSKREDEDKNDGNNNDNDDGLS) is disordered. Residues 172–182 (DSKREDEDKND) are compositionally biased toward basic and acidic residues. Asp-277 (proton acceptor) is an active-site residue. Phosphoserine; by PKH1 or PKH2 is present on Ser-321. Positions 445-524 (RKIDWKLLES…KASGSYLEKY (80 aa)) constitute an AGC-kinase C-terminal domain. Position 490 is a phosphothreonine; by TORC1 (Thr-490). Ser-513 carries the phosphoserine; by TORC1 modification.

This sequence belongs to the protein kinase superfamily. AGC Ser/Thr protein kinase family. S6 kinase subfamily. In terms of processing, phosphorylated by PKA in a TORC1-dependent manner. Phosphorylation at PKA consensus sites RRxS/T decreases upon rapamycin treatment.

It localises to the cytoplasm. The enzyme catalyses L-seryl-[protein] + ATP = O-phospho-L-seryl-[protein] + ADP + H(+). It carries out the reaction L-threonyl-[protein] + ATP = O-phospho-L-threonyl-[protein] + ADP + H(+). Its function is as follows. AGC kinase which plays a role in TOR complex 1 (TORC1) signaling pathway which mediates temporal control of cell growth in response to nutrients. Required for phosphorylation of ribosomal protein S6 (RPS6A/RPS6B) at 'Ser-232' and 'Ser-233'. This Saccharomyces cerevisiae (strain ATCC 204508 / S288c) (Baker's yeast) protein is Serine/threonine-protein kinase YPK3.